The chain runs to 167 residues: Kininogen-1 (167 aa).

An N-terminal signal peptide occupies residues 1–23; sequence MRLWFCLSFFIILCLEHFPGTLA.

The protein belongs to the bradykinin-related peptide family. Expressed by the skin glands.

The protein localises to the secreted. Functionally, vasodilator. Bradykinin produces in vitro relaxation of rat arterial smooth muscle and constriction of intestinal smooth muscle. May target bradykinin receptors (BDKRB). The chain is Kininogen-1 from Bombina orientalis (Oriental fire-bellied toad).